We begin with the raw amino-acid sequence, 213 residues long: Thiamine-phosphate synthase (213 aa).

Residues 38–42 (QLREK) and D70 contribute to the 4-amino-2-methyl-5-(diphosphooxymethyl)pyrimidine site. 2 residues coordinate Mg(2+): D71 and E90. S109 is a 4-amino-2-methyl-5-(diphosphooxymethyl)pyrimidine binding site. Position 135 to 137 (135 to 137 (TQT)) interacts with 2-[(2R,5Z)-2-carboxy-4-methylthiazol-5(2H)-ylidene]ethyl phosphate. K138 contributes to the 4-amino-2-methyl-5-(diphosphooxymethyl)pyrimidine binding site. 2-[(2R,5Z)-2-carboxy-4-methylthiazol-5(2H)-ylidene]ethyl phosphate contacts are provided by residues G165 and 185–186 (VS).

It belongs to the thiamine-phosphate synthase family. The cofactor is Mg(2+).

It catalyses the reaction 2-[(2R,5Z)-2-carboxy-4-methylthiazol-5(2H)-ylidene]ethyl phosphate + 4-amino-2-methyl-5-(diphosphooxymethyl)pyrimidine + 2 H(+) = thiamine phosphate + CO2 + diphosphate. It carries out the reaction 2-(2-carboxy-4-methylthiazol-5-yl)ethyl phosphate + 4-amino-2-methyl-5-(diphosphooxymethyl)pyrimidine + 2 H(+) = thiamine phosphate + CO2 + diphosphate. The catalysed reaction is 4-methyl-5-(2-phosphooxyethyl)-thiazole + 4-amino-2-methyl-5-(diphosphooxymethyl)pyrimidine + H(+) = thiamine phosphate + diphosphate. It functions in the pathway cofactor biosynthesis; thiamine diphosphate biosynthesis; thiamine phosphate from 4-amino-2-methyl-5-diphosphomethylpyrimidine and 4-methyl-5-(2-phosphoethyl)-thiazole: step 1/1. Its function is as follows. Condenses 4-methyl-5-(beta-hydroxyethyl)thiazole monophosphate (THZ-P) and 2-methyl-4-amino-5-hydroxymethyl pyrimidine pyrophosphate (HMP-PP) to form thiamine monophosphate (TMP). In Lacticaseibacillus paracasei (strain ATCC 334 / BCRC 17002 / CCUG 31169 / CIP 107868 / KCTC 3260 / NRRL B-441) (Lactobacillus paracasei), this protein is Thiamine-phosphate synthase.